The sequence spans 359 residues: MALNSSAEDGIKRIQDDCPKAGRHSYIFVMIPTLYSIIFVVGIFGNSLVVIVIYFYMKLKTVASVFLLNLALADLCFLLTLPLWAVYTAMEYRWPFGNHLCKIASASVSFNLYASVFLLTCLSIDRYLAIVHPMKSRLRRTMLVAKVTCIIIWLMAGLASLPAVIHRNVYFIENTNITVCAFHYESRNSTLPIGLGLTKNILGFLFPFLIILTSYTLIWKALKKAYEIQKNKPRNDDIFRIIMAIVLFFFFSWVPHQIFTFLDVLIQLGVIHDCKISDIVDTAMPITICIAYFNNCLNPLFYGFLGKKFKKYFLQLLKYIPPKAKSHSSLSTKMSTLSYRPSDNMSSSAKKPASCFEVE.

Residues 1-25 (MALNSSAEDGIKRIQDDCPKAGRHS) are Extracellular-facing. Residue asparagine 4 is glycosylated (N-linked (GlcNAc...) asparagine). The angiotensin II site is built by glutamine 15 and aspartate 17. Intrachain disulfides connect cysteine 18/cysteine 274 and cysteine 101/cysteine 180. Residues 26 to 55 (YIFVMIPTLYSIIFVVGIFGNSLVVIVIYF) form a helical membrane-spanning segment. The Cytoplasmic segment spans residues 56 to 61 (YMKLKT). The helical transmembrane segment at 62 to 89 (VASVFLLNLALADLCFLLTLPLWAVYTA) threads the bilayer. Residues 90–98 (MEYRWPFGN) are Extracellular-facing. The chain crosses the membrane as a helical span at residues 99–125 (HLCKIASASVSFNLYASVFLLTCLSID). The Cytoplasmic segment spans residues 126-141 (RYLAIVHPMKSRLRRT). Residues 142 to 165 (MLVAKVTCIIIWLMAGLASLPAVI) traverse the membrane as a helical segment. Topologically, residues 166–190 (HRNVYFIENTNITVCAFHYESRNST) are extracellular. An angiotensin II-binding site is contributed by arginine 167. A glycan (N-linked (GlcNAc...) asparagine) is linked at asparagine 176. Phenylalanine 182, histidine 183, and tyrosine 184 together coordinate angiotensin II. Asparagine 188 is a glycosylation site (N-linked (GlcNAc...) asparagine). A helical membrane pass occupies residues 191-216 (LPIGLGLTKNILGFLFPFLIILTSYT). Lysine 199 contacts angiotensin II. At 217-239 (LIWKALKKAYEIQKNKPRNDDIF) the chain is on the cytoplasmic side. The helical transmembrane segment at 240 to 268 (RIIMAIVLFFFFSWVPHQIFTFLDVLIQL) threads the bilayer. Residues 269 to 278 (GVIHDCKISD) are Extracellular-facing. A helical transmembrane segment spans residues 279 to 304 (IVDTAMPITICIAYFNNCLNPLFYGF). Over 305 to 359 (LGKKFKKYFLQLLKYIPPKAKSHSSLSTKMSTLSYRPSDNMSSSAKKPASCFEVE) the chain is Cytoplasmic. Positions 337 to 349 (LSYRPSDNMSSSA) are enriched in polar residues. Positions 337 to 359 (LSYRPSDNMSSSAKKPASCFEVE) are disordered. Cysteine 355 carries the S-palmitoyl cysteine lipid modification.

Belongs to the G-protein coupled receptor 1 family. As to quaternary structure, interacts with MAS1. Interacts with ARRB1. Interacts with FLNA (via filamin repeat 21); increases PKA-mediated phosphorylation of FLNA. Post-translationally, C-terminal Ser or Thr residues may be phosphorylated. As to expression, is expressed in the liver, kidney, aorta, lung, uterus, ovary, spleen, heart, adrenal gland, and vascular smooth muscle cell.

The protein localises to the cell membrane. Receptor for angiotensin II, a vasoconstricting peptide, which acts as a key regulator of blood pressure and sodium retention by the kidney. The activated receptor in turn couples to G-alpha proteins G(q) (GNAQ, GNA11, GNA14 or GNA15) and thus activates phospholipase C and increases the cytosolic Ca(2+) concentrations, which in turn triggers cellular responses such as stimulation of protein kinase C. The protein is Type-1 angiotensin II receptor A (Agtr1) of Rattus norvegicus (Rat).